A 413-amino-acid polypeptide reads, in one-letter code: Replication factor C large subunit (413 aa).

ATP is bound at residue 54 to 61; that stretch reads GPPGSGKT.

It belongs to the activator 1 small subunits family. RfcL subfamily. Heteromultimer composed of small subunits (RfcS) and large subunits (RfcL).

In terms of biological role, part of the RFC clamp loader complex which loads the PCNA sliding clamp onto DNA. This chain is Replication factor C large subunit, found in Thermofilum pendens (strain DSM 2475 / Hrk 5).